Reading from the N-terminus, the 230-residue chain is 7-cyano-7-deazaguanine synthase (230 aa).

9–19 is a binding site for ATP; that stretch reads YSGGLDSTTCL. 4 residues coordinate Zn(2+): Cys-190, Cys-200, Cys-203, and Cys-206.

It belongs to the QueC family. Requires Zn(2+) as cofactor.

The catalysed reaction is 7-carboxy-7-deazaguanine + NH4(+) + ATP = 7-cyano-7-deazaguanine + ADP + phosphate + H2O + H(+). The protein operates within purine metabolism; 7-cyano-7-deazaguanine biosynthesis. In terms of biological role, catalyzes the ATP-dependent conversion of 7-carboxy-7-deazaguanine (CDG) to 7-cyano-7-deazaguanine (preQ(0)). In Syntrophotalea carbinolica (strain DSM 2380 / NBRC 103641 / GraBd1) (Pelobacter carbinolicus), this protein is 7-cyano-7-deazaguanine synthase.